The chain runs to 312 residues: Glyoxylate/hydroxypyruvate reductase A (312 aa).

Residue arginine 227 is part of the active site. Histidine 275 serves as the catalytic Proton donor.

This sequence belongs to the D-isomer specific 2-hydroxyacid dehydrogenase family. GhrA subfamily.

Its subcellular location is the cytoplasm. It carries out the reaction glycolate + NADP(+) = glyoxylate + NADPH + H(+). It catalyses the reaction (R)-glycerate + NAD(+) = 3-hydroxypyruvate + NADH + H(+). The catalysed reaction is (R)-glycerate + NADP(+) = 3-hydroxypyruvate + NADPH + H(+). Its function is as follows. Catalyzes the NADPH-dependent reduction of glyoxylate and hydroxypyruvate into glycolate and glycerate, respectively. The chain is Glyoxylate/hydroxypyruvate reductase A from Salmonella agona (strain SL483).